Here is a 210-residue protein sequence, read N- to C-terminus: Guanylate kinase (210 aa).

Residues 23–203 (GRVVVLSGPS…ACAELVSLLV (181 aa)) form the Guanylate kinase-like domain. 30–37 (GPSAVGKS) is an ATP binding site.

Belongs to the guanylate kinase family.

It localises to the cytoplasm. The catalysed reaction is GMP + ATP = GDP + ADP. Essential for recycling GMP and indirectly, cGMP. The polypeptide is Guanylate kinase (gmk) (Mycobacterium leprae (strain TN)).